A 252-amino-acid chain; its full sequence is Phosphoglycolate phosphatase (252 aa).

Aspartate 13 serves as the catalytic Nucleophile. 3 residues coordinate Mg(2+): aspartate 13, aspartate 15, and aspartate 192.

Belongs to the HAD-like hydrolase superfamily. CbbY/CbbZ/Gph/YieH family. Monomer. It depends on Mg(2+) as a cofactor. Chloride is required as a cofactor.

The catalysed reaction is 2-phosphoglycolate + H2O = glycolate + phosphate. It participates in organic acid metabolism; glycolate biosynthesis; glycolate from 2-phosphoglycolate: step 1/1. Its function is as follows. Specifically catalyzes the dephosphorylation of 2-phosphoglycolate. Is involved in the dissimilation of the intracellular 2-phosphoglycolate formed during the DNA repair of 3'-phosphoglycolate ends, a major class of DNA lesions induced by oxidative stress. This Shigella boydii serotype 4 (strain Sb227) protein is Phosphoglycolate phosphatase.